The primary structure comprises 436 residues: ATP-dependent protease ATPase subunit HslU (436 aa).

Residues Ile-19, 61-65, Asp-249, Glu-314, and Arg-386 contribute to the ATP site; that span reads GVGKT.

This sequence belongs to the ClpX chaperone family. HslU subfamily. A double ring-shaped homohexamer of HslV is capped on each side by a ring-shaped HslU homohexamer. The assembly of the HslU/HslV complex is dependent on binding of ATP.

The protein localises to the cytoplasm. In terms of biological role, ATPase subunit of a proteasome-like degradation complex; this subunit has chaperone activity. The binding of ATP and its subsequent hydrolysis by HslU are essential for unfolding of protein substrates subsequently hydrolyzed by HslV. HslU recognizes the N-terminal part of its protein substrates and unfolds these before they are guided to HslV for hydrolysis. The chain is ATP-dependent protease ATPase subunit HslU from Bartonella tribocorum (strain CIP 105476 / IBS 506).